The chain runs to 197 residues: Neurturin (197 aa).

A signal peptide spans 1-19 (MQRWKAAALASVLCSSVLS). Positions 20-95 (IWMCREGLLL…RAGPRRRRAR (76 aa)) are excised as a propeptide. Positions 74–93 (TPWAGRPPGPRRRAGPRRRR) are disordered. A compositionally biased stretch (basic residues) spans 82–93 (GPRRRAGPRRRR). Intrachain disulfides connect Cys-103–Cys-165, Cys-130–Cys-194, and Cys-134–Cys-196. Heparan sulfate group contacts are provided by Arg-149, Arg-158, Arg-160, and Gln-162.

This sequence belongs to the TGF-beta family. GDNF subfamily. Homodimer; disulfide-linked. Interacts with GFRA2 coreceptor and RET: forms a 2:2:2 ternary complex composed of NRTN ligand, GFRA2 and RET receptor. Also forms a 4:4:4 tetrameric complex composed of 4 copies of NRTN ligand, GFRA2 and RET receptor, which prevents endocytosis of RET.

Its subcellular location is the secreted. In terms of biological role, growth factor that supports the survival of sympathetic neurons in culture. May regulate the development and maintenance of the CNS. Involved in the development of the neural crest. Might control the size of non-neuronal cell population such as haemopoietic cells. Acts by binding to its coreceptor, GFRA2, leading to autophosphorylation and activation of the RET receptor. Heparan sulfate-binding is required for signaling. The protein is Neurturin of Homo sapiens (Human).